The primary structure comprises 57 residues: Small ribosomal subunit protein bS21 (57 aa).

The protein belongs to the bacterial ribosomal protein bS21 family.

The polypeptide is Small ribosomal subunit protein bS21 (Bacillus anthracis (strain A0248)).